Reading from the N-terminus, the 108-residue chain is MSDIFRFDTEEQTLTKEKVKLKRPSKYRVIILNDDFTPMEFVVWILQFVFHRSRAQSQQIMLKAHITGKALCGVYSHDVARTKVIQVQQLAEQHGYPLHCTMEVEEES.

The protein belongs to the ClpS family. Binds to the N-terminal domain of the chaperone ClpA.

Its function is as follows. Involved in the modulation of the specificity of the ClpAP-mediated ATP-dependent protein degradation. In Leptospira borgpetersenii serovar Hardjo-bovis (strain JB197), this protein is ATP-dependent Clp protease adapter protein ClpS.